Reading from the N-terminus, the 187-residue chain is Large ribosomal subunit protein uL10 (187 aa).

Belongs to the universal ribosomal protein uL10 family. As to quaternary structure, part of the ribosomal stalk of the 50S ribosomal subunit. The N-terminus interacts with L11 and the large rRNA to form the base of the stalk. The C-terminus forms an elongated spine to which L12 dimers bind in a sequential fashion forming a multimeric L10(L12)X complex.

Forms part of the ribosomal stalk, playing a central role in the interaction of the ribosome with GTP-bound translation factors. The sequence is that of Large ribosomal subunit protein uL10 from Synechococcus sp. (strain JA-3-3Ab) (Cyanobacteria bacterium Yellowstone A-Prime).